Reading from the N-terminus, the 393-residue chain is Pyruvate dehydrogenase E1 component subunit alpha-2, mitochondrial (393 aa).

A mitochondrion-targeting transit peptide spans 1–28; it reads MALSRLSSRSNTFLKPAITALPSSIRRH. Pyruvate-binding residues include His94, Tyr120, Arg121, Gly169, Val171, Asp200, Gly201, Ala202, Asn229, and Tyr231. Thiamine diphosphate-binding residues include Tyr120, Arg121, Gly169, Val171, Asp200, Gly201, Ala202, and Asn229. Asp200 serves as a coordination point for Mg(2+). Mg(2+)-binding residues include Asn229 and Tyr231. His295 serves as a coordination point for thiamine diphosphate.

In terms of assembly, tetramer of 2 alpha and 2 beta subunits. Requires thiamine diphosphate as cofactor. Mg(2+) is required as a cofactor.

The protein localises to the mitochondrion matrix. It catalyses the reaction N(6)-[(R)-lipoyl]-L-lysyl-[protein] + pyruvate + H(+) = N(6)-[(R)-S(8)-acetyldihydrolipoyl]-L-lysyl-[protein] + CO2. Its activity is regulated as follows. E1 activity is regulated by phosphorylation (inactivation) and dephosphorylation (activation) of the alpha subunit. Functionally, the pyruvate dehydrogenase complex catalyzes the overall conversion of pyruvate to acetyl-CoA and CO(2). It contains multiple copies of three enzymatic components: pyruvate dehydrogenase (E1), dihydrolipoamide acetyltransferase (E2) and lipoamide dehydrogenase (E3). The sequence is that of Pyruvate dehydrogenase E1 component subunit alpha-2, mitochondrial (IAR4) from Arabidopsis thaliana (Mouse-ear cress).